The primary structure comprises 216 residues: CDP-diacylglycerol--glycerol-3-phosphate 3-phosphatidyltransferase (216 aa).

A run of 4 helical transmembrane segments spans residues 40-60 (VVSI…FLDG), 88-108 (VMLC…CILY), 141-161 (MGAV…LAGA), and 176-196 (VVPV…FFPI).

This sequence belongs to the CDP-alcohol phosphatidyltransferase class-I family.

It is found in the cell membrane. The catalysed reaction is a CDP-1,2-diacyl-sn-glycerol + sn-glycerol 3-phosphate = a 1,2-diacyl-sn-glycero-3-phospho-(1'-sn-glycero-3'-phosphate) + CMP + H(+). Its pathway is phospholipid metabolism; phosphatidylglycerol biosynthesis; phosphatidylglycerol from CDP-diacylglycerol: step 1/2. Its function is as follows. This protein catalyzes the committed step to the synthesis of the acidic phospholipids. The sequence is that of CDP-diacylglycerol--glycerol-3-phosphate 3-phosphatidyltransferase (pgsA) from Treponema pallidum (strain Nichols).